An 839-amino-acid chain; its full sequence is Phenylalanine--tRNA ligase beta subunit (839 aa).

In terms of domain architecture, tRNA-binding spans 42 to 166 (GELTGPIVIG…PPSVEGHQLV (125 aa)). The region spanning 421–496 (PEMPRQTINA…RKIGFDRIKA (76 aa)) is the B5 domain. 4 residues coordinate Mg(2+): Asp474, Asp480, Glu483, and Glu484. The 94-residue stretch at 745–838 (SSFPVAKEDV…AEETCGAQLR (94 aa)) folds into the FDX-ACB domain.

Belongs to the phenylalanyl-tRNA synthetase beta subunit family. Type 1 subfamily. Tetramer of two alpha and two beta subunits. Mg(2+) is required as a cofactor.

It localises to the cytoplasm. It carries out the reaction tRNA(Phe) + L-phenylalanine + ATP = L-phenylalanyl-tRNA(Phe) + AMP + diphosphate + H(+). The protein is Phenylalanine--tRNA ligase beta subunit of Cutibacterium acnes (strain DSM 16379 / KPA171202) (Propionibacterium acnes).